Here is a 706-residue protein sequence, read N- to C-terminus: UvrABC system protein C (706 aa).

The GIY-YIG domain occupies 16 to 95 (VEPGVYRFRD…IKEFDPRFNV (80 aa)). The UVR domain maps to 208–243 (DRLAKDMEQQMTAAAEQLDFERAARLRDDISALKRA). A disordered region spans residues 651–706 (APQNGTAPDPAPGTGDPQTPADPHSAATAADIEDDRHATGATGPQMNGSEQQVDRV). Residues 692 to 706 (TGPQMNGSEQQVDRV) show a composition bias toward polar residues.

It belongs to the UvrC family. Interacts with UvrB in an incision complex.

The protein localises to the cytoplasm. In terms of biological role, the UvrABC repair system catalyzes the recognition and processing of DNA lesions. UvrC both incises the 5' and 3' sides of the lesion. The N-terminal half is responsible for the 3' incision and the C-terminal half is responsible for the 5' incision. This chain is UvrABC system protein C, found in Mycolicibacterium smegmatis (strain ATCC 700084 / mc(2)155) (Mycobacterium smegmatis).